Consider the following 470-residue polypeptide: Rhamnulokinase (470 aa).

Residue 12 to 16 coordinates ATP; it reads ASSGR. Substrate is bound by residues A80 and 237-239; that span reads HDT. D238 functions as the Proton acceptor in the catalytic mechanism. T259 serves as a coordination point for ATP. N296 contacts substrate. An ATP-binding site is contributed by Q304. C353 and C370 form a disulfide bridge. G402 is an ATP binding site.

Belongs to the rhamnulokinase family. Mg(2+) is required as a cofactor.

The catalysed reaction is L-rhamnulose + ATP = L-rhamnulose 1-phosphate + ADP + H(+). It functions in the pathway carbohydrate degradation; L-rhamnose degradation; glycerone phosphate from L-rhamnose: step 2/3. Its function is as follows. Involved in the catabolism of L-rhamnose (6-deoxy-L-mannose). Catalyzes the transfer of the gamma-phosphate group from ATP to the 1-hydroxyl group of L-rhamnulose to yield L-rhamnulose 1-phosphate. The chain is Rhamnulokinase from Oceanobacillus iheyensis (strain DSM 14371 / CIP 107618 / JCM 11309 / KCTC 3954 / HTE831).